A 494-amino-acid polypeptide reads, in one-letter code: Amidophosphoribosyltransferase (494 aa).

Residues 1–10 constitute a propeptide that is removed on maturation; it reads MFNYSGLNEE. Catalysis depends on C11, which acts as the Nucleophile. Residues 11–231 enclose the Glutamine amidotransferase type-2 domain; that stretch reads CGVFGIWNHP…AGEYVVINDK (221 aa). Residues S294, D356, and D357 each contribute to the Mg(2+) site.

It in the C-terminal section; belongs to the purine/pyrimidine phosphoribosyltransferase family. The cofactor is Mg(2+).

The catalysed reaction is 5-phospho-beta-D-ribosylamine + L-glutamate + diphosphate = 5-phospho-alpha-D-ribose 1-diphosphate + L-glutamine + H2O. The protein operates within purine metabolism; IMP biosynthesis via de novo pathway; N(1)-(5-phospho-D-ribosyl)glycinamide from 5-phospho-alpha-D-ribose 1-diphosphate: step 1/2. Its function is as follows. Catalyzes the formation of phosphoribosylamine from phosphoribosylpyrophosphate (PRPP) and glutamine. This Staphylococcus aureus (strain MRSA252) protein is Amidophosphoribosyltransferase.